The sequence spans 199 residues: Superoxide dismutase [Mn/Fe] 2 (199 aa).

Positions 27, 81, 161, and 165 each coordinate Fe(3+). Mn(2+)-binding residues include His27, His81, Asp161, and His165.

Belongs to the iron/manganese superoxide dismutase family. Homodimer. Can also form a heterodimer with SodA. Mn(2+) is required as a cofactor. It depends on Fe(3+) as a cofactor.

It catalyses the reaction 2 superoxide + 2 H(+) = H2O2 + O2. Destroys superoxide anion radicals which are normally produced within the cells and which are toxic to biological systems. Catalyzes the dismutation of superoxide anion radicals into O2 and H2O2 by successive reduction and oxidation of the transition metal ion at the active site. In Staphylococcus aureus (strain bovine RF122 / ET3-1), this protein is Superoxide dismutase [Mn/Fe] 2 (sodM).